The sequence spans 146 residues: General odorant-binding protein 19a (146 aa).

Positions 1-22 (MKFHLLLVCVAISLGPIPQSEA) are cleaved as a signal peptide. Intrachain disulfides connect cysteine 40–cysteine 72, cysteine 68–cysteine 126, and cysteine 113–cysteine 135.

The protein belongs to the PBP/GOBP family. As to expression, expressed in adult olfactory system. Expressed exclusively in a subset of chemosensory sensilla on the third antennal segment.

The protein resides in the secreted. Present in the aqueous fluid surrounding olfactory sensory dendrites and are thought to aid in the capture and transport of hydrophobic odorants into and through this fluid. The protein is General odorant-binding protein 19a (Obp19a) of Drosophila melanogaster (Fruit fly).